The following is a 250-amino-acid chain: Proteasome subunit alpha type-4-A (250 aa).

Residues Lys40 and Lys64 each participate in a glycyl lysine isopeptide (Lys-Gly) (interchain with G-Cter in ubiquitin) cross-link.

The protein belongs to the peptidase T1A family. Component of the 20S core complex of the 26S proteasome. The 26S proteasome is composed of a core protease (CP), known as the 20S proteasome, capped at one or both ends by the 19S regulatory particle (RP/PA700). The 20S proteasome core is composed of 28 subunits that are arranged in four stacked rings, resulting in a barrel-shaped structure. The two end rings are each formed by seven alpha subunits, and the two central rings are each formed by seven beta subunits. The catalytic chamber with the active sites is on the inside of the barrel. As to expression, ubiquitous low levels, higher expression in siliques and flowers.

It localises to the cytoplasm. The protein localises to the nucleus. In terms of biological role, the proteasome is a multicatalytic proteinase complex which is characterized by its ability to cleave peptides with Arg, Phe, Tyr, Leu, and Glu adjacent to the leaving group at neutral or slightly basic pH. The proteasome has an ATP-dependent proteolytic activity. This chain is Proteasome subunit alpha type-4-A (PAC1), found in Arabidopsis thaliana (Mouse-ear cress).